Here is a 262-residue protein sequence, read N- to C-terminus: 4-hydroxy-2-oxo-heptane-1,7-dioate aldolase (262 aa).

His-45 (proton acceptor) is an active-site residue. Gln-147 lines the substrate pocket. Glu-149 contacts a divalent metal cation. Substrate-binding residues include Ala-174 and Asp-175. Asp-175 contacts a divalent metal cation.

Belongs to the HpcH/HpaI aldolase family. Homohexamer; trimer of dimers. A divalent metal cation is required as a cofactor.

The catalysed reaction is 4-hydroxy-2-oxoheptanedioate = succinate semialdehyde + pyruvate. It participates in aromatic compound metabolism; 4-hydroxyphenylacetate degradation; pyruvate and succinate semialdehyde from 4-hydroxyphenylacetate: step 7/7. Its function is as follows. Catalyzes the reversible retro-aldol cleavage of 4-hydroxy-2-ketoheptane-1,7-dioate (HKHD) to pyruvate and succinic semialdehyde. The chain is 4-hydroxy-2-oxo-heptane-1,7-dioate aldolase from Shigella boydii serotype 18 (strain CDC 3083-94 / BS512).